We begin with the raw amino-acid sequence, 507 residues long: MVTIRAEEISNIIRERIEQYNREVKIVNTGTVLQVGDGIARIHGLDEVMAGELVEFAEGTIGIALNLESNNVGVVLMGDGLMIQEGSSVKATGRIAQIPVSEAYLGRVINALAKPIDGRGEILASEYRLIESPAPGIISRRSVYEPLQTGLIAIDSMIPIGRGQRELIIGDRQTGKTAVATDTILNQKGQNVICVYVAIGQKASSVAQVVTTFQERGAMEYTIVVAETADSPATLQYLAPYTGAALAEYFMYRQRHTLIIYDDLSKQAQAYRQMSLLLRRPPGREAYPGDVFYLHSRLLERAAKPSSRLGEGSMTALPIVETQSGDVSAYIPTNVISITDGQIFLSADLFNAGIRPAINVGISVSRVGSAAQIKAMKQVAGKLKLELAQFAELEAFAQFASDLDKATQNQLARGQRLRELLKQSQSSPLAVDEQIVTIYTGTNGYLDQLEIGQVKKFIVQLRTHLRTNKPQFQEIISSTKVFTEQAEALLKEAIQEQMELFLLQEQT.

170–177 (GDRQTGKT) is a binding site for ATP.

The protein belongs to the ATPase alpha/beta chains family. F-type ATPases have 2 components, CF(1) - the catalytic core - and CF(0) - the membrane proton channel. CF(1) has five subunits: alpha(3), beta(3), gamma(1), delta(1), epsilon(1). CF(0) has four main subunits: a, b, b' and c.

It localises to the plastid. The protein localises to the chloroplast thylakoid membrane. It catalyses the reaction ATP + H2O + 4 H(+)(in) = ADP + phosphate + 5 H(+)(out). Its function is as follows. Produces ATP from ADP in the presence of a proton gradient across the membrane. The alpha chain is a regulatory subunit. This chain is ATP synthase subunit alpha, chloroplastic, found in Nymphaea alba (White water-lily).